The chain runs to 386 residues: Formate-dependent phosphoribosylglycinamide formyltransferase (386 aa).

Residues 15–16 (EL) and E75 contribute to the N(1)-(5-phospho-beta-D-ribosyl)glycinamide site. ATP contacts are provided by residues R107, K148, 153–158 (SSGKGQ), 188–191 (EQFI), and E196. The ATP-grasp domain occupies 112–301 (ALAVQQLNLQ…EFELHLRAIV (190 aa)). E260 and E272 together coordinate Mg(2+). N(1)-(5-phospho-beta-D-ribosyl)glycinamide is bound by residues D279, K349, and 356-357 (RR).

The protein belongs to the PurK/PurT family. In terms of assembly, homodimer.

It catalyses the reaction N(1)-(5-phospho-beta-D-ribosyl)glycinamide + formate + ATP = N(2)-formyl-N(1)-(5-phospho-beta-D-ribosyl)glycinamide + ADP + phosphate + H(+). It participates in purine metabolism; IMP biosynthesis via de novo pathway; N(2)-formyl-N(1)-(5-phospho-D-ribosyl)glycinamide from N(1)-(5-phospho-D-ribosyl)glycinamide (formate route): step 1/1. Involved in the de novo purine biosynthesis. Catalyzes the transfer of formate to 5-phospho-ribosyl-glycinamide (GAR), producing 5-phospho-ribosyl-N-formylglycinamide (FGAR). Formate is provided by PurU via hydrolysis of 10-formyl-tetrahydrofolate. In Francisella tularensis subsp. holarctica (strain LVS), this protein is Formate-dependent phosphoribosylglycinamide formyltransferase.